Reading from the N-terminus, the 368-residue chain is MPDIVNRKVEHVEIAAFENVDGLSSSTFLNDVILVHQGFPGISFSEINTKTKFFRKEISVPIMVTGMTGGRNELGRINKIIAEVTEKFGIPMGVGSQRVAIEKAEARESFAIVRKVAPTIPIIANLGMPQLVKGYGLKEFQDAIQMIEADAIAVHLNPAQEVFQPEGEPEYQIYALEKLRDISKELSVPIIVKESGNGISMETAKLLYSYGIKNFDTSGQGGTNWIAIEMIRDIRRGNWKAESAKNFLNWGVPTAASIMEVRYSVPDSFLVGSGGIRSGLDAAKAIALGADIAGMALPVLKSAIEGKESLEQFFRKIIFELKAAMMLTGSKDVNALKKTSIVILGKLKEWAEYRGINLSTYDKVRKRE.

Substrate is bound at residue 7 to 8 (RK). FMN is bound by residues Thr65, 66-68 (GMT), Ser96, and Asn125. 96–98 (SQR) serves as a coordination point for substrate. Residue Gln160 participates in substrate binding. Glu161 contributes to the Mg(2+) binding site. FMN is bound by residues Lys193, Ser218, Thr223, 275–277 (GIR), and 296–297 (AL).

It belongs to the IPP isomerase type 2 family. As to quaternary structure, homooctamer. Dimer of tetramers. The cofactor is FMN. It depends on NADPH as a cofactor. Requires Mg(2+) as cofactor.

Its subcellular location is the cytoplasm. The catalysed reaction is isopentenyl diphosphate = dimethylallyl diphosphate. Its function is as follows. Involved in the biosynthesis of isoprenoids. Catalyzes the 1,3-allylic rearrangement of the homoallylic substrate isopentenyl (IPP) to its allylic isomer, dimethylallyl diphosphate (DMAPP). The chain is Isopentenyl-diphosphate delta-isomerase from Saccharolobus islandicus (strain M.16.27) (Sulfolobus islandicus).